The following is a 625-amino-acid chain: Phosphomethylpyrimidine synthase (625 aa).

Residues Asn230, Met259, Tyr288, His324, 344-346 (SRG), 385-388 (DGLR), and Glu424 each bind substrate. Residue His428 coordinates Zn(2+). Tyr451 is a substrate binding site. His492 lines the Zn(2+) pocket. [4Fe-4S] cluster contacts are provided by Cys572, Cys575, and Cys580.

The protein belongs to the ThiC family. In terms of assembly, homodimer. The cofactor is [4Fe-4S] cluster.

The catalysed reaction is 5-amino-1-(5-phospho-beta-D-ribosyl)imidazole + S-adenosyl-L-methionine = 4-amino-2-methyl-5-(phosphooxymethyl)pyrimidine + CO + 5'-deoxyadenosine + formate + L-methionine + 3 H(+). Its pathway is cofactor biosynthesis; thiamine diphosphate biosynthesis. Catalyzes the synthesis of the hydroxymethylpyrimidine phosphate (HMP-P) moiety of thiamine from aminoimidazole ribotide (AIR) in a radical S-adenosyl-L-methionine (SAM)-dependent reaction. In Xanthomonas euvesicatoria pv. vesicatoria (strain 85-10) (Xanthomonas campestris pv. vesicatoria), this protein is Phosphomethylpyrimidine synthase.